A 183-amino-acid polypeptide reads, in one-letter code: Capsid protein (183 aa).

The tract at residues 136–183 (NAPILSTLPETTVVRRRGRSPRRRTPSPRRRRSQSPRRRRTQSRESQC) is disordered. Positions 149–176 (VRRRGRSPRRRTPSPRRRRSQSPRRRRT) are enriched in basic residues. 3 positions are modified to phosphoserine; by host: Ser155, Ser162, and Ser170. The 1; half-length repeat unit spans residues 155 to 161 (SPRRRTP). Residues 155-177 (SPRRRTPSPRRRRSQSPRRRRTQ) are 3 X 8 AA repeats of S-P-R-R-R-[PR]-[ST]-Q. The short motif at 158 to 175 (RRTPSPRRRRSQSPRRRR) is the Bipartite nuclear localization signal element. Repeat copies occupy residues 162–169 (SPRRRRSQ) and 170–177 (SPRRRRTQ). Residues 177–183 (QSRESQC) form an RNA binding region.

The protein belongs to the orthohepadnavirus core antigen family. Homodimerizes, then multimerizes. Interacts with cytosol exposed regions of viral L glycoprotein present in the reticulum-to-Golgi compartment. Interacts with human FLNB. Phosphorylated form interacts with host importin alpha; this interaction depends on the exposure of the NLS, which itself depends upon genome maturation and/or phosphorylation of the capsid protein. Interacts with host NUP153. In terms of processing, phosphorylated by host SRPK1, SRPK2, and maybe protein kinase C or GAPDH. Phosphorylation is critical for pregenomic RNA packaging. Protein kinase C phosphorylation is stimulated by HBx protein and may play a role in transport of the viral genome to the nucleus at the late step during the viral replication cycle.

It localises to the virion. The protein resides in the host cytoplasm. Its function is as follows. Self assembles to form an icosahedral capsid. Most capsids appear to be large particles with an icosahedral symmetry of T=4 and consist of 240 copies of capsid protein, though a fraction forms smaller T=3 particles consisting of 180 capsid proteins. Entering capsids are transported along microtubules to the nucleus. Phosphorylation of the capsid is thought to induce exposure of nuclear localization signal in the C-terminal portion of the capsid protein that allows binding to the nuclear pore complex via the importin (karyopherin-) alpha and beta. Capsids are imported in intact form through the nuclear pore into the nuclear basket, where it probably binds NUP153. Only capsids that contain the mature viral genome can release the viral DNA and capsid protein into the nucleoplasm. Immature capsids get stuck in the basket. Capsids encapsulate the pre-genomic RNA and the P protein. Pre-genomic RNA is reverse-transcribed into DNA while the capsid is still in the cytoplasm. The capsid can then either be directed to the nucleus, providing more genomes for transcription, or bud through the endoplasmic reticulum to provide new virions. The sequence is that of Capsid protein from Hepatitis B virus genotype D (isolate France/alpha1/1989) (HBV-D).